A 278-amino-acid polypeptide reads, in one-letter code: UPF0276 protein Ssed_2857 (278 aa).

Belongs to the UPF0276 family.

This chain is UPF0276 protein Ssed_2857, found in Shewanella sediminis (strain HAW-EB3).